The sequence spans 373 residues: Schlafen-like protein 1 (373 aa).

The segment at M1–P67 is disordered. The segment at K247–V373 is SLFN-like fold.

Belongs to the Schlafen family. Component of the trimeric PUCH (precursor of 21U RNA 5'-end cleavage holoenzyme) complex; consisting of tofu-1, tofu-2 and either slfl-3 or slfl-4; which is required for processing of piRNA precursors. Within the complex, interacts (via N-terminus) with tofu-2 (via N-terminus); the interaction stabilizes tofu-2 and may form a functional nuclease. Within the complex, required for the interaction of tofu-2 (via N-terminus) with slfl-3 (via N-terminus). Interacts (via residues 82-172) with the PETISCO complex subunit tofu-6 (via residues 120-314); the interaction between the PETISCO and PUCH complex members enhances piRNA production in vivo. As to expression, expressed in the germline.

It is found in the cytoplasm. Functionally, component of the trimeric PUCH (precursor of 21U RNA 5'-end cleavage holoenzyme) complex, that acts as an endoribonuclease processing the 5'-end of precursor Piwi-interacting RNAs (piRNAs). The PUCH complex consists of tofu-1, tofu-2 and either slfl-3 or slfl-4, with tofu-2 exhibiting endoribonuclease activity. PUCH-mediated processing strictly requires a 7-methyl-G cap (m7 G-cap) and an uracil at position three (U3). PUCH also exhibits a strict bias for piRNA precursors with an A or G at position 1. Mature piRNA production is enhanced by the interaction of PUCH with the PETISCO complex, which is stabilizing piRNA precursors and allows their processing by PUCH. In Caenorhabditis elegans, this protein is Schlafen-like protein 1.